Reading from the N-terminus, the 391-residue chain is Aspartate aminotransferase (391 aa).

L-aspartate is bound by residues Gly-40 and Asn-176. At Lys-236 the chain carries N6-(pyridoxal phosphate)lysine. Residue Arg-366 coordinates L-aspartate.

It belongs to the class-I pyridoxal-phosphate-dependent aminotransferase family. In terms of assembly, homodimer. The cofactor is pyridoxal 5'-phosphate.

It localises to the cytoplasm. It carries out the reaction L-aspartate + 2-oxoglutarate = oxaloacetate + L-glutamate. The sequence is that of Aspartate aminotransferase (aspC) from Pyrococcus horikoshii (strain ATCC 700860 / DSM 12428 / JCM 9974 / NBRC 100139 / OT-3).